The following is a 1303-amino-acid chain: D-lysergyl-peptide-synthetase subunit 2 (1303 aa).

The adenylation (A) domain stretch occupies residues 256 to 653 (EWCRWTPSAV…CRKSTQVKLR (398 aa)). The Carrier domain occupies 793 to 869 (APSNDIEEAF…ELARHTKLVA (77 aa)). Position 830 is an O-(pantetheine 4'-phosphoryl)serine (S830). Positions 905–1294 (EDVYPCTPLQ…HAAPRTLIGD (390 aa)) are condensation (C) domain.

This sequence belongs to the NRP synthetase family.

Its pathway is alkaloid biosynthesis; ergot alkaloid biosynthesis. D-lysergyl-peptide-synthetase subunit 2; part of the gene cluster that mediates the biosynthesis of fungal ergot alkaloid. DmaW catalyzes the first step of ergot alkaloid biosynthesis by condensing dimethylallyl diphosphate (DMAP) and tryptophan to form 4-dimethylallyl-L-tryptophan. The second step is catalyzed by the methyltransferase easF that methylates 4-dimethylallyl-L-tryptophan in the presence of S-adenosyl-L-methionine, resulting in the formation of 4-dimethylallyl-L-abrine. The catalase easC and the FAD-dependent oxidoreductase easE then transform 4-dimethylallyl-L-abrine to chanoclavine-I which is further oxidized by easD in the presence of NAD(+), resulting in the formation of chanoclavine-I aldehyde. Agroclavine dehydrogenase easG then mediates the conversion of chanoclavine-I aldehyde to agroclavine via a non-enzymatic adduct reaction: the substrate is an iminium intermediate that is formed spontaneously from chanoclavine-I aldehyde in the presence of glutathione. The presence of easA is not required to complete this reaction. Further conversion of agroclavine to paspalic acid is a two-step process involving oxidation of agroclavine to elymoclavine and of elymoclavine to paspalic acid, the second step being performed by the elymoclavine oxidase cloA. Paspalic acid is then further converted to D-lysergic acid. Ergopeptines are assembled from D-lysergic acid and three different amino acids by the D-lysergyl-peptide-synthetases composed each of a monomudular and a trimodular nonribosomal peptide synthetase subunit. LpsB and lpsC encode the monomodular subunits responsible for D-lysergic acid activation and incorporation into the ergopeptine backbone. LpsA1 and A2 subunits encode the trimodular nonribosomal peptide synthetase assembling the tripeptide portion of ergopeptines. LpsA1 is responsible for formation of the major ergopeptine, ergotamine, and lpsA2 for alpha-ergocryptine, the minor ergopeptine of the total alkaloid mixture elaborated by C.purpurea. D-lysergyl-tripeptides are assembled by the nonribosomal peptide synthetases and released as N-(D-lysergyl-aminoacyl)-lactams. Cyclolization of the D-lysergyl-tripeptides is performed by the Fe(2+)/2-ketoglutarate-dependent dioxygenase easH which introduces a hydroxyl group into N-(D-lysergyl-aminoacyl)-lactam at alpha-C of the aminoacyl residue followed by spontaneous condensation with the terminal lactam carbonyl group. The polypeptide is D-lysergyl-peptide-synthetase subunit 2 (Claviceps purpurea (strain 20.1) (Ergot fungus)).